The chain runs to 455 residues: Ribosomal protein uS12 methylthiotransferase RimO (455 aa).

The region spanning 21–131 (GKVGFISLGC…VVGAVHQYVP (111 aa)) is the MTTase N-terminal domain. [4Fe-4S] cluster contacts are provided by cysteine 30, cysteine 66, cysteine 95, cysteine 164, cysteine 168, and cysteine 171. The 238-residue stretch at 150 to 387 (LTPRHYAYLK…MAKQAEISAA (238 aa)) folds into the Radical SAM core domain. A TRAM domain is found at 390-455 (QAKIGRTIDV…DEHDLWARLI (66 aa)).

This sequence belongs to the methylthiotransferase family. RimO subfamily. Requires [4Fe-4S] cluster as cofactor.

The protein localises to the cytoplasm. It carries out the reaction L-aspartate(89)-[ribosomal protein uS12]-hydrogen + (sulfur carrier)-SH + AH2 + 2 S-adenosyl-L-methionine = 3-methylsulfanyl-L-aspartate(89)-[ribosomal protein uS12]-hydrogen + (sulfur carrier)-H + 5'-deoxyadenosine + L-methionine + A + S-adenosyl-L-homocysteine + 2 H(+). Functionally, catalyzes the methylthiolation of an aspartic acid residue of ribosomal protein uS12. This is Ribosomal protein uS12 methylthiotransferase RimO from Marinobacter nauticus (strain ATCC 700491 / DSM 11845 / VT8) (Marinobacter aquaeolei).